The following is a 441-amino-acid chain: Acetyltransferase TRI7 (441 aa).

7 helical membrane passes run 14–34 (GILYYTSTLLAVCTYAALIII), 75–95 (SLTLALTALFILQCCNFLVLT), 158–178 (IWFILRQSLIVAWQCLLLDII), 306–326 (IAFVFLGSAVVHMAIDSFCWG), 336–356 (LAFFGSLVVGIIIEDTIQALC), 377–397 (LVGYIWVSFWFMMTSPWYLYH), and 421–441 (TATMLLFGSGVILKFAIGIEV).

It belongs to the wax synthase family.

It is found in the membrane. It functions in the pathway sesquiterpene biosynthesis; trichothecene biosynthesis. Acetyltransferase; part of the core gene cluster that mediates the biosynthesis of trichothecenes, a very large family of chemically related bicyclic sesquiterpene compounds acting as mycotoxins, including T2-toxin. The biosynthesis of trichothecenes begins with the cyclization of farnesyl diphosphate to trichodiene and is catalyzed by the trichodiene synthase TRI5. Trichodiene undergoes a series of oxygenations catalyzed by the cytochrome P450 monooxygenase TRI4. TRI4 controls the addition of four oxygens at C-2, C-3, C-11, and the C-12, C-13-epoxide to form the intermediate isotrichotriol. Isotrichotriol then undergoes a non-enzymatic isomerization and cyclization to form isotrichodermol. During this process, the oxygen at the C-2 position becomes the pyran ring oxygen and the hydroxyl group at C-11 is lost. More complex type A trichothecenes are built by modifying isotrichodermol through a series of paired hydroxylation and acetylation or acylation steps. Isotrichodermol is converted to isotrichodermin by the acetyltransferase TRI101. TRI101 encodes a C-3 transacetylase that acts as a self-protection or resistance factor during biosynthesis and that the presence of a free C-3 hydroxyl group is a key component of Fusarium trichothecene phytotoxicity. A second hydroxyl group is added to C-15 by the trichothecene C-15 hydroxylase TRI11, producing 15-decalonectrin, which is then acetylated by TRI3, producing calonectrin. A third hydroxyl group is added at C-4 by the cytochrome P450 monooxygenase TRI13, converting calonectrin to 3,15-diacetoxyspirpenol, which is subsequently acetylated by the acetyltransferase TRI7. A fourth hydroxyl group is added to C-8 by the cytochrome P450 monooxygenase TRI1, followed by the addition of an isovaleryl moiety by TRI16. Finally, the acetyl group is removed from the C-3 position by the trichothecene C-3 esterase TRI8 to produce T-2 toxin. The sequence is that of Acetyltransferase TRI7 from Fusarium sporotrichioides.